We begin with the raw amino-acid sequence, 247 residues long: Geranylgeranylglyceryl phosphate synthase (247 aa).

Residues aspartate 24 and serine 53 each contribute to the Mg(2+) site. Sn-glycerol 1-phosphate is bound by residues 172–178, 203–204, and 225–226; these read YLEAGSG, GG, and GT.

Belongs to the GGGP/HepGP synthase family. Group II subfamily. The cofactor is Mg(2+).

It is found in the cytoplasm. It catalyses the reaction sn-glycerol 1-phosphate + (2E,6E,10E)-geranylgeranyl diphosphate = sn-3-O-(geranylgeranyl)glycerol 1-phosphate + diphosphate. It functions in the pathway membrane lipid metabolism; glycerophospholipid metabolism. Functionally, prenyltransferase that catalyzes the transfer of the geranylgeranyl moiety of geranylgeranyl diphosphate (GGPP) to the C3 hydroxyl of sn-glycerol-1-phosphate (G1P). This reaction is the first ether-bond-formation step in the biosynthesis of archaeal membrane lipids. The protein is Geranylgeranylglyceryl phosphate synthase of Cenarchaeum symbiosum (strain A).